Here is a 504-residue protein sequence, read N- to C-terminus: Activin receptor type-1-like (504 aa).

The N-terminal stretch at M1–T20 is a signal peptide. Topologically, residues K21–P121 are extracellular. The N-linked (GlcNAc...) asparagine glycan is linked to N34. 3 disulfide bridges follow: C35–C52, C37–C42, and C47–C70. The segment at N74–L77 is mediates specificity for BMP ligand. 2 cysteine pairs are disulfide-bonded: C78/C90 and C91/C96. N99 carries an N-linked (GlcNAc...) asparagine glycan. The helical transmembrane segment at L122–W142 threads the bilayer. The Cytoplasmic portion of the chain corresponds to R143–H504. Phosphoserine occurs at positions 156, 161, and 162. Positions S173 to Q202 constitute a GS domain. A Protein kinase domain is found at V203 to H504. ATP is bound by residues V209 to V217 and K230. The active-site Proton acceptor is the D331.

It belongs to the protein kinase superfamily. TKL Ser/Thr protein kinase family. TGFB receptor subfamily. In terms of assembly, interacts with TSC22D1/TSC-22. Mg(2+) is required as a cofactor. Requires Mn(2+) as cofactor. As to expression, urogenital ridge, testis, ovary, brain and lung. In lung, found exclusively in pulmonary vessels of all sizes. Also expressed in aorta, vena cava and certain blood vessels of kidney, spleen, heart and intestine. For most blood vessels, a higher level of expression is found in endothelium than in adjacent smooth muscle.

The protein localises to the cell membrane. The catalysed reaction is L-threonyl-[receptor-protein] + ATP = O-phospho-L-threonyl-[receptor-protein] + ADP + H(+). It catalyses the reaction L-seryl-[receptor-protein] + ATP = O-phospho-L-seryl-[receptor-protein] + ADP + H(+). In terms of biological role, type I receptor for TGF-beta family ligands BMP9/GDF2 and BMP10 and important regulator of normal blood vessel development. On ligand binding, forms a receptor complex consisting of two type II and two type I transmembrane serine/threonine kinases. Type II receptors phosphorylate and activate type I receptors which autophosphorylate, then bind and activate SMAD transcriptional regulators. May bind activin as well. This Rattus norvegicus (Rat) protein is Activin receptor type-1-like (Acvrl1).